A 146-amino-acid polypeptide reads, in one-letter code: Core protein D2 (146 aa).

It belongs to the orthopoxvirus OPG114 family. As to quaternary structure, part of a complex composed of the kinase OPG054, OPG092, OPG100, OPG114, OPG115, OPG142 and OPG157.

It is found in the virion. Its function is as follows. Late protein which is part of a large complex required for early virion morphogenesis. This complex participates in the formation of virosomes and the incorporation of virosomal contents into nascent immature virions. In Homo sapiens (Human), this protein is Core protein D2 (OPG114).